The chain runs to 219 residues: Orotate phosphoribosyltransferase (219 aa).

Lysine 26 provides a ligand contact to 5-phospho-alpha-D-ribose 1-diphosphate. 34–35 (FF) is a binding site for orotate. 5-phospho-alpha-D-ribose 1-diphosphate is bound by residues 72–73 (YK), arginine 98, lysine 99, lysine 102, histidine 104, and 124–132 (DDVITAGTA). 2 residues coordinate orotate: threonine 128 and arginine 156.

The protein belongs to the purine/pyrimidine phosphoribosyltransferase family. PyrE subfamily. Homodimer. Mg(2+) is required as a cofactor.

It carries out the reaction orotidine 5'-phosphate + diphosphate = orotate + 5-phospho-alpha-D-ribose 1-diphosphate. It participates in pyrimidine metabolism; UMP biosynthesis via de novo pathway; UMP from orotate: step 1/2. Catalyzes the transfer of a ribosyl phosphate group from 5-phosphoribose 1-diphosphate to orotate, leading to the formation of orotidine monophosphate (OMP). In Stenotrophomonas maltophilia (strain K279a), this protein is Orotate phosphoribosyltransferase.